The following is a 96-amino-acid chain: uncharacterized protein (96 aa).

A disordered region spans residues 35–96 (SPSGEKRSTK…KKFSSPPHPK (62 aa)). The span at 38 to 52 (GEKRSTKNQTKENTK) shows a compositional bias: basic and acidic residues. Positions 69-80 (ANQQTNENSKPL) are enriched in polar residues.

This is an uncharacterized protein from Dictyostelium discoideum (Social amoeba).